We begin with the raw amino-acid sequence, 281 residues long: Energy-coupling factor transporter ATP-binding protein EcfA1 (281 aa).

The 236-residue stretch at 7–242 folds into the ABC transporter domain; the sequence is ISVEDIVFRY…NKELVRIGLD (236 aa). 42–49 serves as a coordination point for ATP; it reads GHNGSGKS. Glu168 acts as the Proton acceptor in catalysis.

The protein belongs to the ABC transporter superfamily. Energy-coupling factor EcfA family. In terms of assembly, forms a stable energy-coupling factor (ECF) transporter complex composed of 2 membrane-embedded substrate-binding proteins (S component), 2 ATP-binding proteins (A component) and 2 transmembrane proteins (T component).

The protein resides in the cell membrane. ATP-binding (A) component of a common energy-coupling factor (ECF) ABC-transporter complex. Unlike classic ABC transporters this ECF transporter provides the energy necessary to transport a number of different substrates. The polypeptide is Energy-coupling factor transporter ATP-binding protein EcfA1 (Bacillus subtilis (strain 168)).